The primary structure comprises 540 residues: MQGDWVLLLLLGLRIHLSFGVIPVEEENPVFWNQKAKEALDVAKKLQPIQTSAKNLILFLGDGMGVPTVTATRILKGQLGGHLGPETPLAMDHFPFTALSKTYNVDRQVPDSAGTATAYLCGVKANYKTIGVSAAARFNQCNSTFGNEVFSVMHRAKKAGKSVGVVTTTRVQHASPAGTYAHTVNRDWYSDADMPSSALQEGCKDIATQLISNMDIDVILGGGRKFMFPKGTPDPEYPGDSDQSGVRLDSRNLVEEWLAKYQGTRYVWNREQLMQASQDPAVTRLMGLFEPTEMKYDVNRNASADPSLAEMTEVAVRLLSRNPQGFYLFVEGGRIDQGHHAGTAYLALTEAVMFDSAIEKASQLTNEKDTLTLITADHSHVFAFGGYTLRGTSIFGLAPLNAQDGKSYTSILYGNGPGYVLNSGNRPNVTDAESGDVNYKQQAAVPLSSETHGGEDVAIFARGPQAHLVHGVQEQNYIAHVMAFAGCLEPYTDCGLAPPADENRPTTPVQNSAITMNNVLLSLQLLVSMLLLVGTALVVS.

An N-terminal signal peptide occupies residues Met-1 to Gly-20. Residue Asp-62 coordinates Mg(2+). Asp-62 and Ser-112 together coordinate Zn(2+). Ser-112 acts as the Phosphoserine intermediate in catalysis. A disulfide bridge links Cys-141 with Cys-203. Asn-142 carries an N-linked (GlcNAc...) asparagine glycan. Ser-175 serves as a coordination point for Mg(2+). Residues Glu-236, Phe-289, and Glu-290 each coordinate Ca(2+). Asn-301 carries N-linked (GlcNAc...) asparagine glycosylation. Asp-305 serves as a coordination point for Ca(2+). Residue Glu-331 participates in Mg(2+) binding. Zn(2+) contacts are provided by Asp-336, His-340, Asp-377, and His-378. Asn-428 carries an N-linked (GlcNAc...) asparagine glycan. Residue His-452 participates in Zn(2+) binding. A disulfide bridge links Cys-487 with Cys-494. A lipid anchor (GPI-anchor amidated asparagine) is attached at Asn-511. Positions Ser-512–Ser-540 are cleaved as a propeptide — removed in mature form.

This sequence belongs to the alkaline phosphatase family. As to quaternary structure, homodimer. It depends on Mg(2+) as a cofactor. Zn(2+) is required as a cofactor. The cofactor is Ca(2+).

Its subcellular location is the cell membrane. It carries out the reaction a phosphate monoester + H2O = an alcohol + phosphate. Functionally, alkaline phosphatase that can hydrolyze various phosphate compounds. In Rattus norvegicus (Rat), this protein is Intestinal-type alkaline phosphatase 1 (Alpi).